The following is a 466-amino-acid chain: Oxysterol-binding protein 4 (466 aa).

Over residues 1–12 the composition is skewed to polar residues; it reads MEIGTSSTTNNI. A disordered region spans residues 1 to 67; that stretch reads MEIGTSSTTN…STSPPSPPIE (67 aa). A compositionally biased stretch (low complexity) spans 24–45; it reads NNNNHNNNSSNNSSNNNSISSS. Over residues 46–60 the composition is skewed to polar residues; sequence PTDSSQLMNGEQSTS.

The protein belongs to the OSBP family.

The sequence is that of Oxysterol-binding protein 4 (osbD) from Dictyostelium discoideum (Social amoeba).